A 1453-amino-acid chain; its full sequence is Leucine-rich repeat-containing protein 9 (1453 aa).

LRR repeat units follow at residues 53–78, 97–119, 120–141, 142–164, 166–188, 224–248, and 264–287; these read FPNL…CLQL, CRNL…LEKL, IKLK…LQTL, KNLK…LDSN, QLER…NLTR, LQRF…AMKK, and KEDL…RVKL. The interval 302-321 is disordered; the sequence is LKGSGKGHSDGSNNSKVTDP. LRR repeat units lie at residues 344-367, 671-693, 694-715, 716-737, 739-758, 759-784, 786-812, 886-908, 909-930, 931-952, 953-975, 976-1001, 1023-1048, 1092-1115, 1116-1138, 1139-1161, 1201-1224, 1225-1247, 1248-1270, 1272-1292, 1293-1317, 1319-1345, and 1365-1388; these read LNAL…IYHI, KARP…TSVY, SHIV…LSKL, TGLR…VYHL, NLEY…GFRG, LMKL…MLCK, TTSL…VIGR, YLKI…LEKL, ENLK…LESC, INLE…ISKM, TKLT…TFDN, MLHL…SFTL, LCNL…LFVI, FKQM…PVDQ, FRNV…LIYL, PNVK…LKPQ, MHSL…QLNR, LRNL…LDNL, VVLQ…AFAK, SSLL…KLQS, LVKL…KLDV, STLR…IFRL, and EFHL…PMDG.

This Homo sapiens (Human) protein is Leucine-rich repeat-containing protein 9 (LRRC9).